A 277-amino-acid chain; its full sequence is Digeranylgeranylglyceryl phosphate synthase (277 aa).

Helical transmembrane passes span 13-33 (PGNAVAAGGLTFIGAFVAGGL), 40-60 (AFAVVATVLATGAGNAINDYF), 89-109 (VALFAVAVVLTLLLPWLAIAI), 143-163 (FLYGGAAVGGDLAAVVVLFAL), 199-219 (RSLYVAAGFVVVAVLSSPLPY), 220-240 (LLGLFGWVYLVVLVPALCGLA), and 256-276 (WLKASMFAAAVAFVIGRLAVV).

The protein belongs to the UbiA prenyltransferase family. DGGGP synthase subfamily. Mg(2+) serves as cofactor.

It is found in the cell membrane. The enzyme catalyses sn-3-O-(geranylgeranyl)glycerol 1-phosphate + (2E,6E,10E)-geranylgeranyl diphosphate = 2,3-bis-O-(geranylgeranyl)-sn-glycerol 1-phosphate + diphosphate. The protein operates within membrane lipid metabolism; glycerophospholipid metabolism. Its function is as follows. Prenyltransferase that catalyzes the transfer of the geranylgeranyl moiety of geranylgeranyl diphosphate (GGPP) to the C2 hydroxyl of (S)-3-O-geranylgeranylglyceryl phosphate (GGGP). This reaction is the second ether-bond-formation step in the biosynthesis of archaeal membrane lipids. The protein is Digeranylgeranylglyceryl phosphate synthase of Natronomonas pharaonis (strain ATCC 35678 / DSM 2160 / CIP 103997 / JCM 8858 / NBRC 14720 / NCIMB 2260 / Gabara) (Halobacterium pharaonis).